A 290-amino-acid polypeptide reads, in one-letter code: Bifunctional protein FolD (290 aa).

NADP(+) is bound by residues G165–S167, S190, and I231.

This sequence belongs to the tetrahydrofolate dehydrogenase/cyclohydrolase family. Homodimer.

The enzyme catalyses (6R)-5,10-methylene-5,6,7,8-tetrahydrofolate + NADP(+) = (6R)-5,10-methenyltetrahydrofolate + NADPH. It carries out the reaction (6R)-5,10-methenyltetrahydrofolate + H2O = (6R)-10-formyltetrahydrofolate + H(+). It participates in one-carbon metabolism; tetrahydrofolate interconversion. Functionally, catalyzes the oxidation of 5,10-methylenetetrahydrofolate to 5,10-methenyltetrahydrofolate and then the hydrolysis of 5,10-methenyltetrahydrofolate to 10-formyltetrahydrofolate. The chain is Bifunctional protein FolD from Aromatoleum aromaticum (strain DSM 19018 / LMG 30748 / EbN1) (Azoarcus sp. (strain EbN1)).